The chain runs to 231 residues: Orotidine 5'-phosphate decarboxylase (231 aa).

Substrate is bound by residues aspartate 11, lysine 33, 60-69, threonine 117, arginine 178, glutamine 187, glycine 207, and arginine 208; that span reads DLKFHDIPNT. Lysine 62 functions as the Proton donor in the catalytic mechanism.

This sequence belongs to the OMP decarboxylase family. Type 1 subfamily. As to quaternary structure, homodimer.

The enzyme catalyses orotidine 5'-phosphate + H(+) = UMP + CO2. It participates in pyrimidine metabolism; UMP biosynthesis via de novo pathway; UMP from orotate: step 2/2. Functionally, catalyzes the decarboxylation of orotidine 5'-monophosphate (OMP) to uridine 5'-monophosphate (UMP). The chain is Orotidine 5'-phosphate decarboxylase from Nitrosomonas europaea (strain ATCC 19718 / CIP 103999 / KCTC 2705 / NBRC 14298).